A 453-amino-acid polypeptide reads, in one-letter code: MAYFPHTPQEIREMLNTIGVDSIEELFSEIPEEIRQKAKENFKLSASPSEIDLLEEIKQISKKNIGKDYISFLGGGAYRHYIPSFVKLVSLFPTFYTSYTPYQPEISQGVLQSIFEYQSLICDLTGMEVANASLYEAGSGIAEAALMSVRITGKKEVIVSSGLNPEYISVLKTYLQVQNIDLKILPLDENGETDITALERTISPSTSGVILQNPNFFGVIETKLKEMETLIHKNNALFILSIYPISLGILKPPSEYNVDIVVGEGQSLGIPLGFGGPYLGILATKKEFIRQIPGRIVGETIDLEGERGFVNTLQTREQHIRRAKATSNICTNEALSAISAAVYMALLGKKGIKKIAEVCFSRAHYLKDRLQKKLGIDFIYPNSYFFNEFVIKTPENSKVFLKKLEERKILGGIPLSKFYKEREKEILIAVTERNSIEEIDYYVKSLKEVLKKD.

Belongs to the GcvP family. N-terminal subunit subfamily. As to quaternary structure, the glycine cleavage system is composed of four proteins: P, T, L and H. In this organism, the P 'protein' is a heterodimer of two subunits.

It catalyses the reaction N(6)-[(R)-lipoyl]-L-lysyl-[glycine-cleavage complex H protein] + glycine + H(+) = N(6)-[(R)-S(8)-aminomethyldihydrolipoyl]-L-lysyl-[glycine-cleavage complex H protein] + CO2. In terms of biological role, the glycine cleavage system catalyzes the degradation of glycine. The P protein binds the alpha-amino group of glycine through its pyridoxal phosphate cofactor; CO(2) is released and the remaining methylamine moiety is then transferred to the lipoamide cofactor of the H protein. The chain is Probable glycine dehydrogenase (decarboxylating) subunit 1 from Dictyoglomus turgidum (strain DSM 6724 / Z-1310).